The sequence spans 159 residues: Phosphopantetheine adenylyltransferase (159 aa).

His-16 contacts ATP. Substrate contacts are provided by Lys-40, Met-72, and Arg-86. Residues 87-89, Glu-97, and 122-128 each bind ATP; these read GLR and YQYLSAS.

The protein belongs to the bacterial CoaD family. In terms of assembly, homohexamer. Requires Mg(2+) as cofactor.

The protein localises to the cytoplasm. The catalysed reaction is (R)-4'-phosphopantetheine + ATP + H(+) = 3'-dephospho-CoA + diphosphate. The protein operates within cofactor biosynthesis; coenzyme A biosynthesis; CoA from (R)-pantothenate: step 4/5. Reversibly transfers an adenylyl group from ATP to 4'-phosphopantetheine, yielding dephospho-CoA (dPCoA) and pyrophosphate. This chain is Phosphopantetheine adenylyltransferase, found in Dehalococcoides mccartyi (strain CBDB1).